The sequence spans 525 residues: Endoglucanase 10 (525 aa).

An N-terminal signal peptide occupies residues 1-26 (MEEKSKSRGWCGWFIAIIVLASVILA). Catalysis depends on Asp109, which acts as the Nucleophile. Asn259 carries N-linked (GlcNAc...) asparagine glycosylation. Residue His442 is part of the active site. N-linked (GlcNAc...) asparagine glycosylation is found at Asn464 and Asn484. Active-site residues include Asp489 and Glu498.

The protein belongs to the glycosyl hydrolase 9 (cellulase E) family.

It is found in the secreted. The enzyme catalyses Endohydrolysis of (1-&gt;4)-beta-D-glucosidic linkages in cellulose, lichenin and cereal beta-D-glucans.. This chain is Endoglucanase 10, found in Arabidopsis thaliana (Mouse-ear cress).